The primary structure comprises 164 residues: Probable calcium-binding protein CML17 (164 aa).

EF-hand domains lie at 4 to 39 (DQQA…LGMP), 40 to 75 (VHRE…VMRV), 88 to 123 (VDEA…LGIK), and 126 to 161 (RTAE…GAFA). Ca(2+)-binding residues include aspartate 17, aspartate 19, aspartate 21, arginine 23, glutamate 28, aspartate 53, asparagine 55, aspartate 57, cysteine 59, glutamate 64, aspartate 101, asparagine 103, aspartate 105, glutamate 112, aspartate 139, aspartate 141, aspartate 143, arginine 145, and glutamate 150.

Functionally, potential calcium sensor. This is Probable calcium-binding protein CML17 (CML17) from Oryza sativa subsp. japonica (Rice).